The sequence spans 412 residues: Alanyl-tRNA editing protein Aarsd1 (412 aa).

Residues histidine 109 and histidine 113 each contribute to the Zn(2+) site. Serine 174 bears the Phosphoserine mark. Positions 209 and 213 each coordinate Zn(2+).

Belongs to the class-II aminoacyl-tRNA synthetase family. Alax-L subfamily. Requires Zn(2+) as cofactor.

Its subcellular location is the cytoplasm. Functions in trans to edit the amino acid moiety from incorrectly charged tRNA(Ala). This is Alanyl-tRNA editing protein Aarsd1 (Aarsd1) from Rattus norvegicus (Rat).